The chain runs to 1400 residues: Tiny macrocysts protein C (1400 aa).

8 consecutive transmembrane segments (helical) span residues 59 to 79, 112 to 132, 152 to 172, 196 to 216, 240 to 260, 266 to 286, 296 to 316, and 320 to 340; these read ILTIISLLIEFCQLSSFGFKQ, IFFWIVIGLLLLGFFNIWYVA, FVSTTVAVLFIPIISLLLIGL, ANLSIAIVSIILIIVFSIVGF, FDVYILFVKLILALLNSLVDF, SIVYFILSITLVFGSIIILPY, SGFYTTVFWVSFMTLVTMGIN, and TATTCYITIVGAFFAFPIGYF. Disordered stretches follow at residues 367–393 and 683–712; these read FNEITKNEKSKTGDSKEKESSSPSKVT and ERSGSKSGSSKSKDDSSESSSSSKGRRGKY. Over residues 369-386 the composition is skewed to basic and acidic residues; it reads EITKNEKSKTGDSKEKES. 4 helical membrane passes run 726–746, 975–995, 1162–1182, and 1342–1362; these read WLMIGTTACCIIFLIVMLIVL, TMLYVWVAIFCFLIILGAVLF, VLAIFLLFGFITMGLWVTYSV, and VLTSVLAISCVLLLVIHLLLF.

The protein resides in the membrane. The protein is Tiny macrocysts protein C (tmcC) of Dictyostelium discoideum (Social amoeba).